A 404-amino-acid polypeptide reads, in one-letter code: Beta-ketoacyl-[acyl-carrier-protein] synthase III, chloroplastic (404 aa).

The N-terminal 43 residues, 1–43, are a transit peptide targeting the chloroplast; the sequence is MANASGFFTHPSIPNLRSRIHVPVRVSGSGFCVSNRFSKRVLC. Catalysis depends on residues cysteine 179, histidine 330, and asparagine 360.

The protein belongs to the thiolase-like superfamily. FabH family.

It is found in the plastid. Its subcellular location is the chloroplast. The enzyme catalyses malonyl-[ACP] + acetyl-CoA + H(+) = 3-oxobutanoyl-[ACP] + CO2 + CoA. It functions in the pathway lipid metabolism; fatty acid biosynthesis. Functionally, catalyzes the condensation reaction of fatty acid synthesis by the addition to an acyl acceptor of two carbons from malonyl-ACP. KAS III catalyzes the first condensation reaction which initiates fatty acid synthesis and may therefore play a role in governing the total rate of fatty acid production. Possesses both acetoacetyl-ACP synthase and acetyl transacylase activities. In Arabidopsis thaliana (Mouse-ear cress), this protein is Beta-ketoacyl-[acyl-carrier-protein] synthase III, chloroplastic.